Here is a 413-residue protein sequence, read N- to C-terminus: Aspartate aminotransferase, cytoplasmic (413 aa).

Residues Gly-39, Trp-141, and Asn-195 each contribute to the L-aspartate site. Lys-259 is modified (N6-(pyridoxal phosphate)lysine). Position 387 (Arg-387) interacts with L-aspartate.

It belongs to the class-I pyridoxal-phosphate-dependent aminotransferase family. In terms of assembly, homodimer. Pyridoxal 5'-phosphate serves as cofactor.

It is found in the cytoplasm. It carries out the reaction L-aspartate + 2-oxoglutarate = oxaloacetate + L-glutamate. The catalysed reaction is L-cysteine + 2-oxoglutarate = 2-oxo-3-sulfanylpropanoate + L-glutamate. It catalyses the reaction (2S)-2-aminobutanoate + 2-oxoglutarate = 2-oxobutanoate + L-glutamate. The enzyme catalyses 3-sulfino-L-alanine + 2-oxoglutarate = 3-sulfinopyruvate + L-glutamate. Functionally, biosynthesis of L-glutamate from L-aspartate or L-cysteine. Important regulator of levels of glutamate, the major excitatory neurotransmitter of the vertebrate central nervous system. Acts as a scavenger of glutamate in brain neuroprotection. The aspartate aminotransferase activity is involved in hepatic glucose synthesis during development and in adipocyte glyceroneogenesis. Using L-cysteine as substrate, regulates levels of mercaptopyruvate, an important source of hydrogen sulfide. Mercaptopyruvate is converted into H(2)S via the action of 3-mercaptopyruvate sulfurtransferase (3MST). Hydrogen sulfide is an important synaptic modulator and neuroprotectant in the brain. This is Aspartate aminotransferase, cytoplasmic from Sus scrofa (Pig).